Here is a 311-residue protein sequence, read N- to C-terminus: Cytosolic Fe-S cluster assembly factor Nubp1 homolog (311 aa).

Positions 9, 23, 26, and 32 each coordinate [4Fe-4S] cluster. Position 63–70 (63–70 (GKGGVGKS)) interacts with ATP. C240 and C243 together coordinate [4Fe-4S] cluster.

It belongs to the Mrp/NBP35 ATP-binding proteins family. NUBP1/NBP35 subfamily. In terms of assembly, heterotetramer of 2 Nubp1 and 2 Nubp2 chains. The cofactor is [4Fe-4S] cluster.

The protein resides in the cytoplasm. In terms of biological role, component of the cytosolic iron-sulfur (Fe/S) protein assembly (CIA) machinery. Required for maturation of extramitochondrial Fe-S proteins. The Nubp1-Nubp2 heterotetramer forms a Fe-S scaffold complex, mediating the de novo assembly of an Fe-S cluster and its transfer to target apoproteins. The sequence is that of Cytosolic Fe-S cluster assembly factor Nubp1 homolog from Drosophila yakuba (Fruit fly).